The primary structure comprises 487 residues: Acetyl-coenzyme A carboxylase carboxyl transferase subunit beta, chloroplastic (487 aa).

Residues 223–487 (LWVQCENCYG…LHAFFPLNQN (265 aa)) enclose the CoA carboxyltransferase N-terminal domain. Zn(2+) is bound by residues C227, C230, C246, and C249. The C4-type zinc finger occupies 227 to 249 (CENCYGLNYKKSFKSKMNLCEQC).

It belongs to the AccD/PCCB family. Acetyl-CoA carboxylase is a heterohexamer composed of biotin carboxyl carrier protein, biotin carboxylase and 2 subunits each of ACCase subunit alpha and ACCase plastid-coded subunit beta (accD). Requires Zn(2+) as cofactor.

It localises to the plastid. It is found in the chloroplast stroma. It catalyses the reaction N(6)-carboxybiotinyl-L-lysyl-[protein] + acetyl-CoA = N(6)-biotinyl-L-lysyl-[protein] + malonyl-CoA. It participates in lipid metabolism; malonyl-CoA biosynthesis; malonyl-CoA from acetyl-CoA: step 1/1. Functionally, component of the acetyl coenzyme A carboxylase (ACC) complex. Biotin carboxylase (BC) catalyzes the carboxylation of biotin on its carrier protein (BCCP) and then the CO(2) group is transferred by the transcarboxylase to acetyl-CoA to form malonyl-CoA. This chain is Acetyl-coenzyme A carboxylase carboxyl transferase subunit beta, chloroplastic, found in Panax ginseng (Korean ginseng).